The primary structure comprises 130 residues: Small ribosomal subunit protein uS9 (130 aa).

This sequence belongs to the universal ribosomal protein uS9 family.

In Nitrosospira multiformis (strain ATCC 25196 / NCIMB 11849 / C 71), this protein is Small ribosomal subunit protein uS9.